Here is a 348-residue protein sequence, read N- to C-terminus: Endoglucanase-6B (348 aa).

Positions 52 and 54 each coordinate substrate. Catalysis depends on proton donor residues D92 and D139. Substrate is bound by residues N183, W186, N222, W282, K310, and E314. A compositionally biased stretch (low complexity) spans 222–241 (NYNPYSTSNPPPYTSGSPSP). Positions 222 to 244 (NYNPYSTSNPPPYTSGSPSPDES) are disordered.

The protein belongs to the glycosyl hydrolase 6 (cellulase B) family. In terms of assembly, monomer.

It catalyses the reaction Endohydrolysis of (1-&gt;4)-beta-D-glucosidic linkages in cellulose, lichenin and cereal beta-D-glucans.. In terms of biological role, plays a central role in the recycling of plant biomass. The biological conversion of cellulose to glucose generally requires three types of hydrolytic enzymes: (1) Endoglucanases which cut internal beta-1,4-glucosidic bonds; (2) Exocellobiohydrolases that cut the disaccharide cellobiose from the non-reducing end of the cellulose polymer chain; (3) Beta-1,4-glucosidases which hydrolyze the cellobiose and other short cello-oligosaccharides to glucose. In Humicola insolens (Soft-rot fungus), this protein is Endoglucanase-6B.